The chain runs to 607 residues: SNW/SKI-interacting protein A (607 aa).

Disordered regions lie at residues 29-77 (ERYG…GGAF), 178-205 (AQPKNVPTHDSESKFIKYKPSQQSAAFN), 217-265 (EMAQ…IPPC), 327-434 (LQLK…DRDR), and 516-607 (KVMK…ERGR). A compositionally biased stretch (low complexity) spans 35-49 (SAQSDAAAAAAKPSG). The SNW stretch occupies residues 190–353 (SKFIKYKPSQ…QKARMERTGA (164 aa)). A compositionally biased stretch (pro residues) spans 240-251 (PPVPVMHSPPRP). 2 coiled-coil regions span residues 313–349 (AREAVQMRSKVQRELQLKEKERKEQELRALAQKARME) and 391–418 (EREARIERDRIREERRRERERERRLEAR). 5 stretches are compositionally biased toward basic and acidic residues: residues 327-339 (LQLKEKERKEQEL), 379-434 (EQPR…DRDR), 516-527 (KVMKTDRFKPDK), 535-550 (RSGKRDRPVEFDKQEE), and 562-571 (EVKKGKKAVE).

Belongs to the SNW family. As to quaternary structure, interacts with FLO6/SIP4. Interacts with DIS1. In terms of tissue distribution, widely expressed.

It localises to the nucleus. Acts as a positive regulator of drought and salt tolerance. Acts as a positive regulator of cell viability. In Oryza sativa subsp. japonica (Rice), this protein is SNW/SKI-interacting protein A.